A 222-amino-acid chain; its full sequence is uncharacterized protein (222 aa).

This is an uncharacterized protein from Homo sapiens (Human).